We begin with the raw amino-acid sequence, 131 residues long: L-aspartate semialdehyde sulfurtransferase iron-sulfur subunit (131 aa).

4Fe-4S ferredoxin-type domains lie at 73–102 (KVIKRDLEKCVHCGCCITQCPINVIYMDED) and 103–131 (YNVVFKEEDCVGCKNCLKACPFKAIEIFE). [4Fe-4S] cluster is bound by residues Cys-82, Cys-85, Cys-88, Cys-92, Cys-112, Cys-115, Cys-118, and Cys-122.

May form a complex with MJ0100. It depends on [4Fe-4S] cluster as a cofactor.

The protein operates within amino-acid biosynthesis. In terms of biological role, required for O-acetylhomoserine sulfhydrylase (OAHS)-independent homocysteine (Hcy) biosynthesis. Together with MJ0100, catalyzes the condensation of sulfide with aspartate semialdehyde to generate homocysteine. May be involved in the reduction of the disulfide formed in MJ0100. In Methanocaldococcus jannaschii (strain ATCC 43067 / DSM 2661 / JAL-1 / JCM 10045 / NBRC 100440) (Methanococcus jannaschii), this protein is L-aspartate semialdehyde sulfurtransferase iron-sulfur subunit.